A 107-amino-acid polypeptide reads, in one-letter code: Ferredoxin (107 aa).

4Fe-4S ferredoxin-type domains follow at residues 8–37 (ERVVIDQDICISCGACVAACPYQALELDEN) and 38–67 (GKSRLIWEKCKDDFSCVAVCPVKAISKASE). 3 residues coordinate [4Fe-4S] cluster: C17, C20, and C23. 3 residues coordinate [3Fe-4S] cluster: C27, C47, and C53. C57 is a binding site for [4Fe-4S] cluster.

In terms of assembly, monomer. Requires [4Fe-4S] cluster as cofactor. The cofactor is [3Fe-4S] cluster. In terms of processing, the N-terminus is blocked.

Its function is as follows. Ferredoxins are iron-sulfur proteins that transfer electrons in a wide variety of metabolic reactions. This is Ferredoxin from Pyrobaculum islandicum (strain DSM 4184 / JCM 9189 / GEO3).